The chain runs to 164 residues: Aspartic proteinase nepenthesin-1 (164 aa).

Residues 17–164 (YLMXLSIGTP…VSFVSAQCGA (148 aa)) form the Peptidase A1 domain. The active site involves aspartate 35. N-linked (GlcNAc...) asparagine glycosylation occurs at asparagine 93.

The protein belongs to the peptidase A1 family. In terms of tissue distribution, parenchymal cells surrounding the secretory glands.

The protein resides in the secreted. The enzyme catalyses Similar to pepsin, but also cleaves on either side of Asp and at Lys-|-Arg.. With respect to regulation, inhibited by pepstatin and by diazoacetyl-D,L-norleucine methyl ester (DAN) in the presence of Cu(2+) ions. Extracellular proteinase found in the pitcher fluid of carnivorous plants. Digest prey for nitrogen uptake. The chain is Aspartic proteinase nepenthesin-1 from Nepenthes distillatoria (Pitcher plant).